A 209-amino-acid chain; its full sequence is Protein-L-isoaspartate O-methyltransferase (209 aa).

Ser60 is an active-site residue.

It belongs to the methyltransferase superfamily. L-isoaspartyl/D-aspartyl protein methyltransferase family.

The protein localises to the cytoplasm. The enzyme catalyses [protein]-L-isoaspartate + S-adenosyl-L-methionine = [protein]-L-isoaspartate alpha-methyl ester + S-adenosyl-L-homocysteine. Catalyzes the methyl esterification of L-isoaspartyl residues in peptides and proteins that result from spontaneous decomposition of normal L-aspartyl and L-asparaginyl residues. It plays a role in the repair and/or degradation of damaged proteins. This chain is Protein-L-isoaspartate O-methyltransferase, found in Photobacterium profundum (strain SS9).